The sequence spans 2117 residues: MCSIPGLPSKGSNVPVLITRVNLNPSCVLVEFWGNFDEDRKFAYQQLKKEIQYPRECFSESDGNPGDLCLVQVYETWYRARIVSRDSDEYSVFLIDEGRTLRAAVNTLAWGKSDFFYLPPEVEFCILANALPLSPENNWSSMALEFMKTFCGRRVNATVQDVLVAHRTFLLDIPCLSRQMFEMGFAKKLYSDQFMEFVVRSLQASTGTSDLKRISSIRTKPVEIIEQKEKQQAYMFPELQTDTVETVVITEVTSPFRIFCQLKVFSQELKKLTEQITQYYEGRVGSYFARAENLGSPCASRGSDGKWYRSVLQQVMSANNVVEVLHVDYGKKQFVQVENVKPLASEFFRMPVVTYVCSLHGIVDKGVGWTASQIDYLKSLLLNRTVIAKFQYQSLSEGVHYVTLYGEENTNINKLFELKPKCSLDSDMTLADFAVQKSPSSQKSKISRTTESTHINETYSDLKVNKPVFFTETLTPNSTHMAVVQHVDSPGKFWIQTQRYADEFDLLMNGLGNLYSDPTSTESLIRKPVVGLICAAKAQDGVFYRAAVYKVIDKTAEVYFLDYGNTEVVDSFNLRQLPLRFQQLPAVAVKCSLHGVKPRLKLWEERATLFFSKLVRDRIIDLHVQDKQQDTHIVQLVDPSLDGEKDVSKLLCNAGFAVSEKSIVDYSATRSCGLKTTHASGVFLTGTQPQTPCSSSVVMDSASAFKEYLFPIGSSLEVTVSYIENPNDFWCQKARNAACLEVLMQDIQRFYSHSEFEPLLEAACVARHPETGIWYRALVIQKHQTPHVDVLFIDYGQTKKVAIEDLRKITPAFLKMKGQAFRCSLYNLIHPVLHSSSDWSTEATLEFQEFVDAAASMNVPLKCTIFAVMYDSQKVVFNVVDLETPFQSICNLLVQRRLADRAPSKRSPLPPFRLDTYYYSTHGVKTGCDEKVSITCVKGVNQFFCHLARNSDEVEKLAEKVNFLCHQLEATKCPQTFGTVCFAKYTDGLWYRGQIKSTKPSVVINFVDYGDTLEVDKSDLLPVPIEAGDIMSVPVQAIECGLSDMPEELPCEVDNWFRKFADSHCFTALIVAKEPAGKLILELYDGKTQVNALIKQKFHNEIHKNDASTFKIYGLKSRAAESVEASACKKESSTGPKRDAIDQVPKSRESHAIQRSNDVASKQPQSRWGFSTNGRPEPTRDSGTINNCQKQPELRTSQGNLRHPCTSSKPEVVKPKPQALLKESALPIKSIKPGLEAEVFISHCNSPCSFFVQFATDEDDIYSLVEKLNADQSRCRNIDSSDIHEGDLVCAMFPDDSSWYRAVVRKNTNEKIDVEFVDFGNTAVISSKNVCHLGQSFASFPRYSIHCSVHKLNVDSKDQELAPNFKQVLEQNIEKVICTFVKMSGTMWEVRLDVNGVVLGSVCKDHVKPEIAIPDLKDAASEIKVCTYYKNPDISIGQVITGYTSYIKGPQLFWCQYVAMDKLQEISDMLQNIGNASETTLREDCMPVGSACIALFTEDNLWYRAKVTSKDLDTLSITFVDYGNESKVKIGDVKALPPKLSDVPPHAFDCQLEGFDVSEGFWDETADDAFYELVHDKPLNITIEKMGNSEMPHIVKLDCDGVDINTTMKSHWKTRNPETPPAELFNGAEMASDDDYVASKVNIDSVVTFDTDTDPADNETCTSALEMELSEQENLLSSTGVENEAQIDPLKMATENVTLPITESTVLSETHKKLETITEDEPVLGFTGLSDTNQHAVSKETDVGLPQHSEGASSVTIDSFLMNNTDSQLCIVEEPEAPSYEIIQSNLGCLRRATEKKPVGSECVIWSQVRRSWCTARVLKVSEEATLVLLEKYDSEVVVDPINIFEIMPEKPLQIACIEAAIANDDATKETDATLENSASKLYQTEVSDANGIAVALESEDLNGKEETFIDQMAPNDELAGQPQEEESVSCSAFLEDSKAKHMLVEGAQVHDLVQGLCPDDVESKDPQDDLNTSFEEQNDGAKMSTAVDLLLDFLDTAPRDKVQDVSETDALLEEFNIHVTEDLIVLTSDDGAESDTASDGTLHGDAVAMEVGPDTEESSCFQERSNASDCTSAEDSQVTHLTLKVEDASDDVIFVGVLQESQAVVHEPESEKEKRD.

5 Tudor domains span residues 62-118, 291-350, 527-584, 757-816, and 974-1030; these read DGNP…FFYL, AENL…FFRM, KPVV…FQQL, EPLL…FLKM, and PQTF…AGDI. The disordered stretch occupies residues 1125–1216; it reads ASACKKESST…SSKPEVVKPK (92 aa). The span at 1127 to 1152 shows a compositional bias: basic and acidic residues; sequence ACKKESSTGPKRDAIDQVPKSRESHA. Polar residues-rich tracts occupy residues 1153–1174 and 1181–1209; these read IQRSNDVASKQPQSRWGFSTNG and DSGTINNCQKQPELRTSQGNLRHPCTSSK. Tudor domains are found at residues 1282-1340 and 1485-1543; these read DIHE…FASF and CMPV…LSDV.

As to quaternary structure, interacts (via Tudor domain) with buc (when dimethylated on arginine residues); and may be responsible for recruitment of different protein complexes to germ plasm.

It localises to the cytoplasm. Tudor domain-containing protein involved in germ cell development, more specifically the formation of chromatoid body (during spermiogenesis), Balbiani body (during oogenesis), germ plasm (upon fertilization), and for proper miRNA expression and spliceosome maturation. Required for Balbiani body and germ plasm formation and mobility through interaction with dimethylated arginines in the prion-like protein Bucky ball (buc). Coordinates transcript deposition into future primordial germ cells. Interacts with known germ plasm mRNAs such as vasa, dazl, nanos3 and hook2. The sequence is that of Tudor domain-containing 6 from Danio rerio (Zebrafish).